Reading from the N-terminus, the 1087-residue chain is Exportin-7-B (1087 aa).

An Importin N-terminal domain is found at 30 to 96; the sequence is AEKALVEFTN…RNYVLTYLAT (67 aa).

This sequence belongs to the exportin family.

The protein resides in the cytoplasm. The protein localises to the nucleus. Functionally, mediates the nuclear export of proteins (cargos) with broad substrate specificity. The sequence is that of Exportin-7-B (xpo7-b) from Xenopus laevis (African clawed frog).